A 333-amino-acid chain; its full sequence is 4-hydroxyproline 2-epimerase (333 aa).

The Proton acceptor role is filled by Cys-90. Substrate is bound by residues 91–92 (GH), His-223, and Asp-249. The Proton donor role is filled by Cys-253. 254–255 (GT) provides a ligand contact to substrate.

The protein belongs to the proline racemase family.

The enzyme catalyses trans-4-hydroxy-L-proline = cis-4-hydroxy-D-proline. In terms of biological role, catalyzes the epimerization of trans-4-hydroxy-L-proline (t4LHyp) to cis-4-hydroxy-D-proline (c4DHyp). Is likely involved in a degradation pathway that converts t4LHyp to alpha-ketoglutarate. Displays no proline racemase activity. The chain is 4-hydroxyproline 2-epimerase from Shewanella loihica (strain ATCC BAA-1088 / PV-4).